Here is a 375-residue protein sequence, read N- to C-terminus: Growth/differentiation factor 8 (375 aa).

The signal sequence occupies residues 1 to 23 (MQKLQIYVYIYLFMLIVAGPVDL). Positions 24-266 (NENSEQKENV…VTDTPKRSRR (243 aa)) are excised as a propeptide. A glycan (N-linked (GlcNAc...) asparagine) is linked at N71. 4 cysteine pairs are disulfide-bonded: C272/C282, C281/C340, C309/C372, and C313/C374.

This sequence belongs to the TGF-beta family. In terms of assembly, homodimer; disulfide-linked. Interacts with WFIKKN2, leading to inhibit its activity. Interacts with FSTL3. In terms of processing, synthesized as large precursor molecule that undergoes proteolytic cleavage to generate an N-terminal propeptide and a disulfide linked C-terminal dimer, which is the biologically active molecule. The circulating form consists of a latent complex of the C-terminal dimer and other proteins, including its propeptide, which maintain the C-terminal dimer in a latent, inactive state. Ligand activation requires additional cleavage of the prodomain by a tolloid-like metalloproteinase.

It is found in the secreted. In terms of biological role, acts specifically as a negative regulator of skeletal muscle growth. This is Growth/differentiation factor 8 (MSTN) from Sus scrofa (Pig).